Reading from the N-terminus, the 396-residue chain is Probable sugar efflux transporter (396 aa).

A run of 12 helical transmembrane segments spans residues 15–35 (VVTL…PVGL), 50–70 (VGIM…PFML), 81–101 (LICL…SWSF), 103–123 (VLVI…SITA), 136–156 (AQAL…GLPL), 170–190 (FFAI…LLPL), 209–229 (PALM…YTAY), 246–266 (FATA…VIFG), 275–295 (ALVS…LPAA), 299–319 (IHLG…GLGM), 333–353 (VAMA…ALVG), and 364–384 (MIGY…IIIF).

It belongs to the major facilitator superfamily. SotB (TC 2.A.1.2) family.

The protein localises to the cell inner membrane. Functionally, involved in the efflux of sugars. The physiological role may be the reduction of the intracellular concentration of toxic sugars or sugar metabolites. This chain is Probable sugar efflux transporter, found in Escherichia coli O139:H28 (strain E24377A / ETEC).